Consider the following 162-residue polypeptide: NADH-quinone oxidoreductase subunit I (162 aa).

2 consecutive 4Fe-4S ferredoxin-type domains span residues 53-83 (LRRYPNGEERCIACKLCEAICPAQAITIEPE) and 93-122 (RRYDLDMTKCIYCGLCQEACPVDAIVEGPN). Cysteine 63, cysteine 66, cysteine 69, cysteine 73, cysteine 102, cysteine 105, cysteine 108, and cysteine 112 together coordinate [4Fe-4S] cluster.

Belongs to the complex I 23 kDa subunit family. In terms of assembly, NDH-1 is composed of 14 different subunits. Subunits NuoA, H, J, K, L, M, N constitute the membrane sector of the complex. [4Fe-4S] cluster is required as a cofactor.

The protein localises to the cell inner membrane. The enzyme catalyses a quinone + NADH + 5 H(+)(in) = a quinol + NAD(+) + 4 H(+)(out). Its function is as follows. NDH-1 shuttles electrons from NADH, via FMN and iron-sulfur (Fe-S) centers, to quinones in the respiratory chain. The immediate electron acceptor for the enzyme in this species is believed to be ubiquinone. Couples the redox reaction to proton translocation (for every two electrons transferred, four hydrogen ions are translocated across the cytoplasmic membrane), and thus conserves the redox energy in a proton gradient. This is NADH-quinone oxidoreductase subunit I from Paramagnetospirillum magneticum (strain ATCC 700264 / AMB-1) (Magnetospirillum magneticum).